Consider the following 510-residue polypeptide: MGQFITLMQSIPEALNMAFNVALVIVSLLCVTKGLINLWKCGIIQLLMFLALAGRSCDGEYKIDRRHVLSHVEFNLTRMFDNLPQSCSINNTHHYYKGPENTTWGVELTLTNTSVMNRSDENVTSIRSLGFGNITNCDKTGEAGHTLKWLLNELHFTVLHVTRHIGALCRTTAGAGLLIQYNLTTSDKGGEVGRHLIASLAQIIGDNKAAWVGKCYNNCTSSGKCSLTNCEGGTHYKFLVIQNTTWPNHCSYSPMSTVRMIIQKTAYSSVSRKLLGFFTWDISDSSGQHVPGGYCLEQWAIVWAGIKCFDNSVMAKCNKDHNEEFCDTMRLFDFNQNAIKTLQLNVENSLNLMKKSINGLISDSLVIRNSLKQLAKIPYCNYTKFWYVNDTITGKHSLPQCWLVSNGSYLNETHFKNEWLWESQKLYNDMLLKEYEERQGNTPLALADLCFWSLVFFTTTVFFQLIGIPTHRHLIGEGCPKPHRLTSNSLCSCGFYKIPKKPFRWVRKGK.

Residue Gly2 is the site of N-myristoyl glycine; by host attachment. Over 2 to 17 (GQFITLMQSIPEALNM) the chain is Extracellular. The helical transmembrane segment at 18–32 (AFNVALVIVSLLCVT) threads the bilayer. Lys33 is a topological domain (cytoplasmic). A helical membrane pass occupies residues 34-53 (GLINLWKCGIIQLLMFLALA). Extracellular-facing segments span residues 54-58 (GRSCD) and 59-448 (GEYK…ALAD). Cys57 is a Zn(2+) binding site. N-linked (GlcNAc...) asparagine; by host glycans are attached at residues Asn75, Asn90, Asn101, Asn112, Asn117, Asn122, Asn133, Asn182, Asn218, and Asn243. 4 cysteine pairs are disulfide-bonded: Cys87–Cys250, Cys295–Cys308, Cys317–Cys326, and Cys380–Cys401. 4 N-linked (GlcNAc...) asparagine; by host glycosylation sites follow: Asn381, Asn389, Asn406, and Asn411. Residues 449 to 469 (LCFWSLVFFTTTVFFQLIGIP) traverse the membrane as a helical segment. Residues 470-510 (THRHLIGEGCPKPHRLTSNSLCSCGFYKIPKKPFRWVRKGK) lie on the Cytoplasmic side of the membrane. Residues His471, His473, Cys479, His483, Cys491, and Cys493 each contribute to the Zn(2+) site.

It belongs to the arenaviridae GPC protein family. In terms of assembly, homotetramer; disulfide-linked. As to quaternary structure, homotetramer. GP2 homotetramers bind through ionic interactions with GP1 homotetramers to form the GP complex together with the stable signal peptide. The GP-C polyprotein interacts with the host protease MBTPS1/SKI-1 resulting in the polyprotein processing. In terms of processing, specific enzymatic cleavages in vivo yield mature proteins. GP-C polyprotein is cleaved in the endoplasmic reticulum by the host protease MBTPS1. Only cleaved glycoprotein is incorporated into virions. Post-translationally, the SSP remains stably associated with the GP complex following cleavage by signal peptidase and plays crucial roles in the trafficking of GP through the secretory pathway. Myristoylation is necessary for GP2-mediated fusion activity.

Its subcellular location is the virion membrane. It is found in the host endoplasmic reticulum membrane. It localises to the host Golgi apparatus membrane. The protein resides in the host cell membrane. Its function is as follows. Class I viral fusion protein that directs fusion of viral and host endosomal membranes, leading to delivery of the nucleocapsid into the cytoplasm. Membrane fusion is mediated by irreversible conformational changes induced upon acidification in the endosome. In terms of biological role, stable signal peptide (SSP): cleaved and functions as a signal peptide. In addition, it is also retained as the third component of the GP complex. The SSP is required for efficient glycoprotein expression, post-translational maturation cleavage of GP1 and GP2, glycoprotein transport to the cell surface plasma membrane, formation of infectious virus particles, and acid pH-dependent glycoprotein-mediated cell fusion. Interacts with the host receptor. In Pirital mammarenavirus (isolate Rat/Venezuela/VAV-488/1995) (PIRV), this protein is Pre-glycoprotein polyprotein GP complex.